The following is a 1379-amino-acid chain: DNA-directed RNA polymerase subunit beta'' (1379 aa).

Zn(2+) contacts are provided by Cys220, Cys293, Cys300, and Cys303.

Belongs to the RNA polymerase beta' chain family. RpoC2 subfamily. As to quaternary structure, in plastids the minimal PEP RNA polymerase catalytic core is composed of four subunits: alpha, beta, beta', and beta''. When a (nuclear-encoded) sigma factor is associated with the core the holoenzyme is formed, which can initiate transcription. The cofactor is Zn(2+).

It localises to the plastid. The protein resides in the chloroplast. The enzyme catalyses RNA(n) + a ribonucleoside 5'-triphosphate = RNA(n+1) + diphosphate. DNA-dependent RNA polymerase catalyzes the transcription of DNA into RNA using the four ribonucleoside triphosphates as substrates. The sequence is that of DNA-directed RNA polymerase subunit beta'' from Nasturtium officinale (Watercress).